The primary structure comprises 1066 residues: MTSQEKVPFQVQLSLPQILSRRDWENPQITQYHRLEAHPPFHSWRDVESAQKDRPSPQQQTLNGLWSFSYFTQPEAVPEHWVRCDLAEAKPLPVPANWQLHGYDAPIYTNIQYPIPVNPPRVPDLNPTGCYSRDFTLEPSWLASGKTRIIFDGVSSAFYLWCNGQWVGYSQDSRLPAEFDLTPYLQAGSNRIAVLVLRWSDGSYLEDQDMWRMSGIFRDVKLLHKPEIHLRDIHIMTHLSPEFTSANLEVMAAVNIPSLQLNDPQVTGSYQLRVQLWLADKLVASLQQPLGTQAIDERGPYTDRTQLVLRIDQPLLWSAEQPTLYRAVVSLLNHQQELIEAEAYDVGFRQVAIHQGLLKINGKAVLIRGVNRHEHHPQTGQAIDEESLLQDILLMKQHNFNAVRCSHYPNHPLWYRLCDRYGLYVVDEANIETHGMQPMSRLSDDPSWFSAFSERVTRMVQRDRNHPCIIIWSLGNESGHGATHDALYRWIKTNDPTRPVQYEGGGANTLATDILCPMYARVDEDQPFPAVPKWSIKKWVGLPNESRPLILCEYAHAMGNSFGGFARYWQAFRQYPRLQGGFIWDWVDQSLTHHNDHGQPYWAYGGDFGDTPNDRQFCMNGLVFPDRSPHPSLYEAQCAQQFFQFSLLSTTPLVINITSEYLFRESDNEQLYWRIMLEGESMLEGSQPLNLSPESSQCYRLAEKLPTLNKPGQLWLNVEIRQPKETPWSPAQHRSAWHQWRLPQPLFSPSSDLTNATAHYAPQLQHNLQLQHNRQLQHDLQLQQDEQHIKVTYQQQCWQFSRQTGRLAQWWVADKPMLLRPLQDQFVRAPLDNDIGISEATHIDPNAWVERWKKAGMYQLQQRCLSLHVDHLSHSVQISAEYGYEFEQEPLLHSHWVYRFDRHGRMTIDVNVRIATSLPAPARIGMCCQLADISPTVDWLGLGPHENYPDRQLAAQYGHWSLPLEQMHTAYIFPSENGLRCNTHTLNYGRWTLTGDFHFGISRYSTQQLMVTSHQHLLEPEEGTWLNIDGFHMGVGGDDSWSPSVHIDDILTRETYQYQICWQYKV.

Substrate-binding residues include Asn-110 and Asp-209. Asp-209 contributes to the Na(+) binding site. Mg(2+) contacts are provided by Glu-432, His-434, and Glu-477. Residues Glu-477 and 553–556 (EYAH) contribute to the substrate site. Glu-477 acts as the Proton donor in catalysis. The Nucleophile role is filled by Glu-553. Position 613 (Asn-613) interacts with Mg(2+). Residues Phe-617 and Asn-620 each coordinate Na(+). Positions 620 and 1041 each coordinate substrate.

This sequence belongs to the glycosyl hydrolase 2 family. Homotetramer. Requires Mg(2+) as cofactor. The cofactor is Na(+).

The catalysed reaction is Hydrolysis of terminal non-reducing beta-D-galactose residues in beta-D-galactosides.. In Yersinia pseudotuberculosis serotype O:1b (strain IP 31758), this protein is Beta-galactosidase.